The chain runs to 333 residues: Oxidoreductase AN1596 (333 aa).

The protein belongs to the NmrA-type oxidoreductase family.

It functions in the pathway secondary metabolite biosynthesis; terpenoid biosynthesis. Functionally, oxidoreductase; part of the gene cluster that mediates the biosynthesis of the diterpene ent-pimara-8(14),15-diene (PD). Within the cluster, the HMG-CoA reductase AN1593 functions in the mevalonate pathway, which produces isoprenoid precursors. The geranylgeranyl pyrophosphate (GGPP) synthase AN1592 is needed in the formation of GGPP, the precursor for diterpenes. Lastly, the pimaradiene synthase pbcA performs the 2 cyclization steps that convert GGPP to ent-pimara-8(14),15-diene. The putative roles of the remaining cluster enzymes in ent-pimara-8(14),15-diene biosynthesis is unclear. The cytochrome P450 monooxygenase AN1598, the glutathione S-transferase AN1595, the oxidoreductases AN1596 and AN1597 probably function as decorative enzymes. It is possible that in biological conditions the compound is oxidized to ent-pimara-8(14),15-dien-19-oic acid, which is a bioactive diterpene compound predominant in many plant extracts. In Emericella nidulans (strain FGSC A4 / ATCC 38163 / CBS 112.46 / NRRL 194 / M139) (Aspergillus nidulans), this protein is Oxidoreductase AN1596.